Reading from the N-terminus, the 677-residue chain is Levanase (677 aa).

Positions 1 to 24 are cleaved as a signal peptide; it reads MKKRLIQVMIMFTLLLTMAFSADA. Residues 46–49, Q65, W73, 105–106, 171–172, E223, and W313 each bind substrate; these read WMND, FS, and RD. The active site involves D49.

The protein belongs to the glycosyl hydrolase 32 family.

Its subcellular location is the secreted. It catalyses the reaction Hydrolysis of terminal, non-reducing (2-&gt;1)- and (2-&gt;6)-linked beta-D-fructofuranose residues in fructans.. Is completely inhibited by Ag(+) and Hg(2+) ions. Functionally, exo-fructosidase that can hydrolyze both levan and inulin, leading to the production of free fructose. Is also able to hydrolyze sucrose and to a small extent raffinose, but not melezitose, stachylose, cellobiose, maltose, and lactose. The protein is Levanase (sacC) of Bacillus subtilis (strain 168).